The chain runs to 148 residues: Azurin (148 aa).

The N-terminal stretch at 1-20 is a signal peptide; it reads MLRKLAAVSLLSLLSAPLLA. The region spanning 21–148 is the Plastocyanin-like domain; it reads AECSVDIQGN…ALMKGTLTLK (128 aa). A disulfide bond links cysteine 23 and cysteine 46. 4 residues coordinate Cu cation: histidine 66, cysteine 132, histidine 137, and methionine 141.

Its subcellular location is the periplasm. Functionally, transfers electrons from cytochrome c551 to cytochrome oxidase. This is Azurin (azu) from Pseudomonas aeruginosa (strain ATCC 15692 / DSM 22644 / CIP 104116 / JCM 14847 / LMG 12228 / 1C / PRS 101 / PAO1).